Here is a 425-residue protein sequence, read N- to C-terminus: Serine--tRNA ligase (425 aa).

Residue 231–233 (TAE) coordinates L-serine. An ATP-binding site is contributed by 262-264 (RSE). Residue Glu285 participates in L-serine binding. 349–352 (EISS) is an ATP binding site. Position 385 (Ser385) interacts with L-serine.

The protein belongs to the class-II aminoacyl-tRNA synthetase family. Type-1 seryl-tRNA synthetase subfamily. As to quaternary structure, homodimer. The tRNA molecule binds across the dimer.

The protein resides in the cytoplasm. It catalyses the reaction tRNA(Ser) + L-serine + ATP = L-seryl-tRNA(Ser) + AMP + diphosphate + H(+). The catalysed reaction is tRNA(Sec) + L-serine + ATP = L-seryl-tRNA(Sec) + AMP + diphosphate + H(+). Its pathway is aminoacyl-tRNA biosynthesis; selenocysteinyl-tRNA(Sec) biosynthesis; L-seryl-tRNA(Sec) from L-serine and tRNA(Sec): step 1/1. Functionally, catalyzes the attachment of serine to tRNA(Ser). Is also able to aminoacylate tRNA(Sec) with serine, to form the misacylated tRNA L-seryl-tRNA(Sec), which will be further converted into selenocysteinyl-tRNA(Sec). The polypeptide is Serine--tRNA ligase (Bacillus subtilis (strain 168)).